The primary structure comprises 142 residues: Chorion class A protein Ld19 (142 aa).

The N-terminal stretch at 1–18 (MNSFALLLVCIQACLVQS) is a signal peptide.

This sequence belongs to the chorion protein family.

Its function is as follows. This protein is one of many from the eggshell of the gypsy moth. The polypeptide is Chorion class A protein Ld19 (Lymantria dispar (Gypsy moth)).